A 432-amino-acid chain; its full sequence is Adenylosuccinate synthetase (432 aa).

Residues 13–19 (GDEGKGK) and 41–43 (GHT) each bind GTP. Asp-14 acts as the Proton acceptor in catalysis. Mg(2+) is bound by residues Asp-14 and Gly-41. Residues 14–17 (DEGK), 39–42 (NAGH), Thr-130, Arg-144, Gln-225, Thr-240, and Arg-304 contribute to the IMP site. His-42 acts as the Proton donor in catalysis. 300–306 (STTGRRR) provides a ligand contact to substrate. GTP contacts are provided by residues Arg-306, 332–334 (KID), and 415–417 (STG).

The protein belongs to the adenylosuccinate synthetase family. In terms of assembly, homodimer. It depends on Mg(2+) as a cofactor.

The protein localises to the cytoplasm. It carries out the reaction IMP + L-aspartate + GTP = N(6)-(1,2-dicarboxyethyl)-AMP + GDP + phosphate + 2 H(+). It functions in the pathway purine metabolism; AMP biosynthesis via de novo pathway; AMP from IMP: step 1/2. Plays an important role in the de novo pathway of purine nucleotide biosynthesis. Catalyzes the first committed step in the biosynthesis of AMP from IMP. This chain is Adenylosuccinate synthetase, found in Blochmanniella pennsylvanica (strain BPEN).